The following is a 44-amino-acid chain: Antibacterial protein 3 (44 aa).

Met1 carries the N-formylmethionine modification.

The protein belongs to the staphylococcal hemolytic protein family.

It is found in the secreted. Its function is as follows. Has hemolytic activity and also inhibits the growth of gonococci. The polypeptide is Antibacterial protein 3 (Staphylococcus haemolyticus).